The chain runs to 190 residues: Protein SYM1 (190 aa).

Transmembrane regions (helical) follow at residues 16-36 (PVLG…VIAQ), 54-74 (IVTW…RTLE), 91-111 (LDQF…MTFM), and 131-151 (LQAN…LVPL).

This sequence belongs to the peroxisomal membrane protein PXMP2/4 family.

Its subcellular location is the mitochondrion inner membrane. In terms of biological role, may be involved in cellular response to stress. Required to maintain mitochondrial DNA (mtDNA) integrity and stability. This Cryptococcus neoformans var. neoformans serotype D (strain B-3501A) (Filobasidiella neoformans) protein is Protein SYM1 (SYM1).